We begin with the raw amino-acid sequence, 147 residues long: Hemoglobin subunit beta (147 aa).

One can recognise a Globin domain in the interval glutamate 3–histidine 147. 2 residues coordinate heme b: histidine 64 and histidine 93.

It belongs to the globin family. Heterotetramer of two alpha chains and two beta chains. In terms of tissue distribution, red blood cells.

In terms of biological role, involved in oxygen transport from gills to the various peripheral tissues. This is Hemoglobin subunit beta (hbb) from Trematomus hansoni (Striped rockcod).